A 90-amino-acid chain; its full sequence is Co-chaperonin GroES (90 aa).

This sequence belongs to the GroES chaperonin family. As to quaternary structure, heptamer of 7 subunits arranged in a ring. Interacts with the chaperonin GroEL.

The protein localises to the cytoplasm. Together with the chaperonin GroEL, plays an essential role in assisting protein folding. The GroEL-GroES system forms a nano-cage that allows encapsulation of the non-native substrate proteins and provides a physical environment optimized to promote and accelerate protein folding. GroES binds to the apical surface of the GroEL ring, thereby capping the opening of the GroEL channel. The polypeptide is Co-chaperonin GroES (Bacteroides thetaiotaomicron (strain ATCC 29148 / DSM 2079 / JCM 5827 / CCUG 10774 / NCTC 10582 / VPI-5482 / E50)).